We begin with the raw amino-acid sequence, 518 residues long: Probable protein phosphatase 2C 14 (518 aa).

2 stretches are compositionally biased toward low complexity: residues 1–10 (MVEAAAGRRS) and 86–105 (PQRQQPRLAAQTPRGPAPGA). 2 disordered regions span residues 1–31 (MVEAAAGRRSGANRRRPSGGGERRRQQQQHQ) and 86–108 (PQRQQPRLAAQTPRGPAPGADGR). The region spanning 129–437 (VASLYTLQGK…DDCAVVCLFL (309 aa)) is the PPM-type phosphatase domain. Residues aspartate 165 and glycine 166 each contribute to the Mn(2+) site. The disordered stretch occupies residues 192–222 (TDEGRQTSTSSIKSNGDETGSPGNMGRDAEQ). Residues 197–213 (QTSTSSIKSNGDETGSP) show a composition bias toward polar residues. Mn(2+) is bound by residues aspartate 382 and aspartate 428.

The protein belongs to the PP2C family. Mg(2+) serves as cofactor. Requires Mn(2+) as cofactor.

The enzyme catalyses O-phospho-L-seryl-[protein] + H2O = L-seryl-[protein] + phosphate. The catalysed reaction is O-phospho-L-threonyl-[protein] + H2O = L-threonyl-[protein] + phosphate. This chain is Probable protein phosphatase 2C 14, found in Oryza sativa subsp. japonica (Rice).